Reading from the N-terminus, the 194-residue chain is UPF0215 protein TV0037 (194 aa).

This sequence belongs to the UPF0215 family.

The protein is UPF0215 protein TV0037 of Thermoplasma volcanium (strain ATCC 51530 / DSM 4299 / JCM 9571 / NBRC 15438 / GSS1).